The sequence spans 170 residues: Photosystem II extrinsic protein V (170 aa).

Positions Met-1–Ala-33 are cleaved as a signal peptide. Heme c contacts are provided by Cys-70, Cys-73, His-74, and Met-137.

The protein belongs to the cytochrome c family. PsbV subfamily. As to quaternary structure, PSII is composed of 1 copy each of membrane proteins PsbA, PsbB, PsbC, PsbD, PsbE, PsbF, PsbH, PsbI, PsbJ, PsbK, PsbL, PsbM, PsbT, PsbX, PsbY, PsbZ, Psb30/Ycf12, peripheral proteins PsbO, CyanoQ (PsbQ), PsbU, PsbV and a large number of cofactors. It forms dimeric complexes. Heme c serves as cofactor.

It is found in the cellular thylakoid membrane. Functionally, one of the extrinsic, lumenal subunits of photosystem II (PSII). PSII is a light-driven water plastoquinone oxidoreductase, using light energy to abstract electrons from H(2)O, generating a proton gradient subsequently used for ATP formation. The extrinsic proteins stabilize the structure of photosystem II oxygen-evolving complex (OEC), the ion environment of oxygen evolution and protect the OEC against heat-induced inactivation. Low-potential cytochrome c that plays a role in the OEC of PSII. This is Photosystem II extrinsic protein V from Synechococcus sp. (strain CC9902).